We begin with the raw amino-acid sequence, 120 residues long: Holo-[acyl-carrier-protein] synthase (120 aa).

Residues Asp-6 and Glu-55 each contribute to the Mg(2+) site.

The protein belongs to the P-Pant transferase superfamily. AcpS family. The cofactor is Mg(2+).

Its subcellular location is the cytoplasm. It carries out the reaction apo-[ACP] + CoA = holo-[ACP] + adenosine 3',5'-bisphosphate + H(+). Functionally, transfers the 4'-phosphopantetheine moiety from coenzyme A to a Ser of acyl-carrier-protein. The polypeptide is Holo-[acyl-carrier-protein] synthase (Pelodictyon phaeoclathratiforme (strain DSM 5477 / BU-1)).